A 140-amino-acid chain; its full sequence is Vesicle transport protein GOT1 (140 aa).

4 consecutive transmembrane segments (helical) span residues 12-32 (IGLGLTGFGVFFTFLGVIFVF), 35-55 (GLIAMGNILFLAGVTLTIGIN), 71-91 (ISFGLGFLLVVFGWPIFGLLL), and 96-116 (FLVLFSGFWPTLAVFLQRIPL).

This sequence belongs to the GOT1 family. Homodimer. No interactions with STL1, STL2, CESA1, CESA3, CESA4, CESA6, CESA7 or CESA8.

Its subcellular location is the golgi apparatus membrane. Functionally, may be involved in fusion of ER-derived transport vesicles with the Golgi complex. The chain is Vesicle transport protein GOT1 from Arabidopsis thaliana (Mouse-ear cress).